Consider the following 142-residue polypeptide: Galactose-6-phosphate isomerase subunit LacA (142 aa).

This sequence belongs to the LacAB/RpiB family. Heteromultimeric protein consisting of LacA and LacB.

It catalyses the reaction aldehydo-D-galactose 6-phosphate = keto-D-tagatose 6-phosphate. It functions in the pathway carbohydrate metabolism; D-galactose 6-phosphate degradation; D-tagatose 6-phosphate from D-galactose 6-phosphate: step 1/1. The protein is Galactose-6-phosphate isomerase subunit LacA of Enterococcus faecalis (strain ATCC 700802 / V583).